Reading from the N-terminus, the 163-residue chain is NADH-quinone oxidoreductase subunit I (163 aa).

2 consecutive 4Fe-4S ferredoxin-type domains span residues 53-83 and 94-123; these read LRRYPNGEERCIACKLCEAVCPALAITIEAG and TLYEIDMFKCIYCGFCEESCPVDSIVETRE. Residues Cys-63, Cys-66, Cys-69, Cys-73, Cys-103, Cys-106, Cys-109, and Cys-113 each contribute to the [4Fe-4S] cluster site.

This sequence belongs to the complex I 23 kDa subunit family. NDH-1 is composed of 14 different subunits. Subunits NuoA, H, J, K, L, M, N constitute the membrane sector of the complex. [4Fe-4S] cluster is required as a cofactor.

It is found in the cell inner membrane. It carries out the reaction a quinone + NADH + 5 H(+)(in) = a quinol + NAD(+) + 4 H(+)(out). Its function is as follows. NDH-1 shuttles electrons from NADH, via FMN and iron-sulfur (Fe-S) centers, to quinones in the respiratory chain. The immediate electron acceptor for the enzyme in this species is believed to be ubiquinone. Couples the redox reaction to proton translocation (for every two electrons transferred, four hydrogen ions are translocated across the cytoplasmic membrane), and thus conserves the redox energy in a proton gradient. The polypeptide is NADH-quinone oxidoreductase subunit I (Alkalilimnicola ehrlichii (strain ATCC BAA-1101 / DSM 17681 / MLHE-1)).